The following is a 359-amino-acid chain: Alanine racemase (359 aa).

Lys-34 functions as the Proton acceptor; specific for D-alanine in the catalytic mechanism. Lys-34 bears the N6-(pyridoxal phosphate)lysine mark. Arg-129 is a binding site for substrate. Tyr-255 functions as the Proton acceptor; specific for L-alanine in the catalytic mechanism. A substrate-binding site is contributed by Met-303.

Belongs to the alanine racemase family. Pyridoxal 5'-phosphate serves as cofactor.

The catalysed reaction is L-alanine = D-alanine. It participates in amino-acid biosynthesis; D-alanine biosynthesis; D-alanine from L-alanine: step 1/1. Functionally, catalyzes the interconversion of L-alanine and D-alanine. May also act on other amino acids. The protein is Alanine racemase (alr) of Shigella dysenteriae serotype 1 (strain Sd197).